The primary structure comprises 710 residues: Polyribonucleotide nucleotidyltransferase (710 aa).

D486 and D492 together coordinate Mg(2+). In terms of domain architecture, KH spans 553–612; it reads PRIHTIKISVDKIKDVIGKGGSVIRALTEETGTTIEIEDDGTVKIAATDGDKAKFAIRRI. The region spanning 622–690 is the S1 motif domain; it reads GRIYNGKVTR…RQGRVRLSIK (69 aa). The interval 690–710 is disordered; that stretch reads KEAGEQAQPEAEAVPAAPEAE. Residues 694-710 show a composition bias toward low complexity; it reads EQAQPEAEAVPAAPEAE.

It belongs to the polyribonucleotide nucleotidyltransferase family. As to quaternary structure, component of the RNA degradosome, which is a multiprotein complex involved in RNA processing and mRNA degradation. The cofactor is Mg(2+).

It is found in the cytoplasm. It carries out the reaction RNA(n+1) + phosphate = RNA(n) + a ribonucleoside 5'-diphosphate. Its function is as follows. Involved in mRNA degradation. Catalyzes the phosphorolysis of single-stranded polyribonucleotides processively in the 3'- to 5'-direction. The protein is Polyribonucleotide nucleotidyltransferase of Erwinia tasmaniensis (strain DSM 17950 / CFBP 7177 / CIP 109463 / NCPPB 4357 / Et1/99).